The primary structure comprises 149 residues: Large ribosomal subunit protein bL9 (149 aa).

This sequence belongs to the bacterial ribosomal protein bL9 family.

Its function is as follows. Binds to the 23S rRNA. This Legionella pneumophila (strain Lens) protein is Large ribosomal subunit protein bL9.